A 356-amino-acid chain; its full sequence is 5-formaminoimidazole-4-carboxamide-1-(beta)-D-ribofuranosyl 5'-monophosphate synthetase (356 aa).

The 5-amino-1-(5-phospho-beta-D-ribosyl)imidazole-4-carboxamide site is built by His-27 and Ser-94. The ATP-grasp domain maps to 101–333; that stretch reads TENFAELTVP…YADLIQEDLS (233 aa). ATP-binding positions include 145 to 196 and Glu-226; that span reads PRDI…TRYY. 5-amino-1-(5-phospho-beta-D-ribosyl)imidazole-4-carboxamide is bound at residue Asn-255. Positions 293 and 306 each coordinate Mg(2+).

It belongs to the phosphohexose mutase family. The cofactor is Mg(2+). Requires Mn(2+) as cofactor.

It catalyses the reaction 5-amino-1-(5-phospho-beta-D-ribosyl)imidazole-4-carboxamide + formate + ATP = 5-formamido-1-(5-phospho-D-ribosyl)imidazole-4-carboxamide + ADP + phosphate. The protein operates within purine metabolism; IMP biosynthesis via de novo pathway; 5-formamido-1-(5-phospho-D-ribosyl)imidazole-4-carboxamide from 5-amino-1-(5-phospho-D-ribosyl)imidazole-4-carboxamide (formate route): step 1/1. Functionally, catalyzes the ATP- and formate-dependent formylation of 5-aminoimidazole-4-carboxamide-1-beta-d-ribofuranosyl 5'-monophosphate (AICAR) to 5-formaminoimidazole-4-carboxamide-1-beta-d-ribofuranosyl 5'-monophosphate (FAICAR) in the absence of folates. The chain is 5-formaminoimidazole-4-carboxamide-1-(beta)-D-ribofuranosyl 5'-monophosphate synthetase from Methanosarcina acetivorans (strain ATCC 35395 / DSM 2834 / JCM 12185 / C2A).